The chain runs to 408 residues: Serine/threonine-protein kinase UCNL (408 aa).

A Protein kinase domain is found at 21–341 (IKALKILGKG…AAEIKELAFF (321 aa)). Residues 27–35 (LGKGATGTV) and K54 contribute to the ATP site. D152 acts as the Proton acceptor in catalysis. One can recognise an AGC-kinase C-terminal domain in the interval 342-408 (AGVRWDLLTE…CRKNDPFIEF (67 aa)).

It belongs to the protein kinase superfamily. AGC Ser/Thr protein kinase family. Expressed in the epidermis and cortex of the transition zone of the root apex. Expressed in rosette leaves, stems, flowers and siliques.

The protein resides in the cytoplasm. It localises to the nucleus. The catalysed reaction is L-seryl-[protein] + ATP = O-phospho-L-seryl-[protein] + ADP + H(+). It catalyses the reaction L-threonyl-[protein] + ATP = O-phospho-L-threonyl-[protein] + ADP + H(+). Functionally, regulates planar ovule integument development. In Arabidopsis thaliana (Mouse-ear cress), this protein is Serine/threonine-protein kinase UCNL.